A 478-amino-acid chain; its full sequence is Zinc finger protein 410 (478 aa).

Residues 187-213 are disordered; the sequence is NAKTSSNGENVHLGSGDGQSKDSGPLP. C2H2-type zinc fingers lie at residues 219–243, 249–273, 279–303, 309–333, and 339–362; these read LKCT…LKTH, FICP…MRTH, FMCH…RRIH, FLCE…LVVH, and HQCQ…RKHH. Zn(2+) contacts are provided by C221, C226, H239, H243, C251, C256, H269, H273, C281, C286, H299, H303, C311, C316, H329, H333, C341, C344, H357, and H361.

Interacts with CDKN2A/p14ARF. In terms of processing, sumoylated. Sumoylation increases its half-life, possibly by blocking ubiquitin-mediated degradation. Post-translationally, O-glycosylated. O-GlcNAcylation may occur in response to increasing glucose levels and affect transcription factor activity. As to expression, widely expressed.

It localises to the nucleus. It is found in the chromosome. In terms of biological role, transcription factor that binds to the sequence motif 5'-CATCCCATAATA-3', and is specifically required to silence expression of fetal hemoglobin in adult erythroid cells. Prevents expression of fetal hemoglobin genes HBG1 and HBG2 through CHD4: acts as a direct transcriptional activator of CHD4, a central component of the NuRD complex that represses transcription of fetal hemoglobin genes HBG1 and HBG2 in erythroid cells. May also activate transcription of matrix-remodeling genes such as MMP1 during fibroblast senescence. May activate transcription of the gap junction gene GJC1, perhaps in response to increasing glucose. However, recent studies suggest that ZNF410 is dedicated to regulate expression of a single gene: CHD4. The chain is Zinc finger protein 410 from Homo sapiens (Human).